We begin with the raw amino-acid sequence, 677 residues long: DNA ligase (677 aa).

Residues 35–39 (DAEFD), 85–86 (SL), and glutamate 110 contribute to the NAD(+) site. Residue lysine 112 is the N6-AMP-lysine intermediate of the active site. The NAD(+) site is built by arginine 133 and glutamate 173. Residues 189 to 210 (QKEGGKPFANPRNAAAGSLRQK) are disordered. NAD(+) is bound by residues lysine 289 and lysine 313. Zn(2+) contacts are provided by cysteine 407, cysteine 410, cysteine 426, and cysteine 432. In terms of domain architecture, BRCT spans 596 to 677 (IPDQVLEGLT…FKQLLANGTV (82 aa)).

The protein belongs to the NAD-dependent DNA ligase family. LigA subfamily. It depends on Mg(2+) as a cofactor. The cofactor is Mn(2+).

The catalysed reaction is NAD(+) + (deoxyribonucleotide)n-3'-hydroxyl + 5'-phospho-(deoxyribonucleotide)m = (deoxyribonucleotide)n+m + AMP + beta-nicotinamide D-nucleotide.. DNA ligase that catalyzes the formation of phosphodiester linkages between 5'-phosphoryl and 3'-hydroxyl groups in double-stranded DNA using NAD as a coenzyme and as the energy source for the reaction. It is essential for DNA replication and repair of damaged DNA. The chain is DNA ligase from Corynebacterium diphtheriae (strain ATCC 700971 / NCTC 13129 / Biotype gravis).